We begin with the raw amino-acid sequence, 749 residues long: Poly(U)-binding-splicing factor rnp-6 (749 aa).

RRM domains are found at residues 102–176 and 207–285; these read SRIY…LKVN and FRVY…KCVT. Disordered regions lie at residues 323–388 and 457–480; these read AGSS…PDVV and IEEE…KMKR. Positions 330 to 354 are enriched in low complexity; sequence PSESGGSRAASPAPRAQSPATPSSS. The region spanning 658 to 739 is the RRM 3; atypical domain; it reads NVIVLRNMVT…NTVKAEAYDQ (82 aa).

The protein belongs to the RRM half pint family.

The protein resides in the nucleus. Its function is as follows. DNA- and RNA-binding protein, involved in several nuclear processes such as pre-mRNA splicing, apoptosis and transcription regulation. Ensures the correct splicing of genes involved in immunity to promote longevity in response to infection by pathogenic bacteria such as S.aureus. This is Poly(U)-binding-splicing factor rnp-6 from Caenorhabditis elegans.